A 165-amino-acid chain; its full sequence is Phosphopantetheine adenylyltransferase (165 aa).

Residue S9 coordinates substrate. ATP contacts are provided by residues 9-10 (SF) and H17. Substrate-binding residues include K41, I75, and R89. ATP is bound by residues 90–92 (GVR), E100, and 125–131 (YLFVRSD).

The protein belongs to the bacterial CoaD family. In terms of assembly, homohexamer. Mg(2+) is required as a cofactor.

It localises to the cytoplasm. It catalyses the reaction (R)-4'-phosphopantetheine + ATP + H(+) = 3'-dephospho-CoA + diphosphate. It functions in the pathway cofactor biosynthesis; coenzyme A biosynthesis; CoA from (R)-pantothenate: step 4/5. Functionally, reversibly transfers an adenylyl group from ATP to 4'-phosphopantetheine, yielding dephospho-CoA (dPCoA) and pyrophosphate. This is Phosphopantetheine adenylyltransferase from Borrelia duttonii (strain Ly).